The chain runs to 364 residues: Chorismate synthase (364 aa).

2 residues coordinate NADP(+): Arg-48 and Arg-54. Residues 125–127 (RSS), 238–239 (NA), Gly-278, 293–297 (KPTSS), and Arg-319 each bind FMN.

Belongs to the chorismate synthase family. In terms of assembly, homotetramer. The cofactor is FMNH2.

The catalysed reaction is 5-O-(1-carboxyvinyl)-3-phosphoshikimate = chorismate + phosphate. It participates in metabolic intermediate biosynthesis; chorismate biosynthesis; chorismate from D-erythrose 4-phosphate and phosphoenolpyruvate: step 7/7. Functionally, catalyzes the anti-1,4-elimination of the C-3 phosphate and the C-6 proR hydrogen from 5-enolpyruvylshikimate-3-phosphate (EPSP) to yield chorismate, which is the branch point compound that serves as the starting substrate for the three terminal pathways of aromatic amino acid biosynthesis. This reaction introduces a second double bond into the aromatic ring system. This Marinobacter nauticus (strain ATCC 700491 / DSM 11845 / VT8) (Marinobacter aquaeolei) protein is Chorismate synthase.